The primary structure comprises 127 residues: MSSTPNPKAFPLADAALTQQILDVVQQASNMRQLKKGANEATKTLNRGISEFIIMAADCEPIEILLHLPLLCEDKNVPYVFVPSRVALGRACGVSRPVIAASITTNDASAIKSQIYAVKDKIETLLI.

Belongs to the eukaryotic ribosomal protein eL8 family. In terms of assembly, component of the U3 snoRNP particle. Binds to the C'/D and B/C motifs in U3 snoRNA. Component of the 25S U4/U6.U5 tri-snRNP particle, a subcomplex of the spliceosome. Binds to the 5' stem-loop of U4 snRNA.

Its subcellular location is the nucleus. It localises to the nucleolus. In terms of biological role, common component of the spliceosome and rRNA processing machinery. In association with the spliceosomal U4/U6.U5 tri-snRNP particle, required for splicing of pre-mRNA. In association with box C/D snoRNPs, required for processing of pre-ribosomal RNA (rRNA) and site-specific 2'-O-methylation of substrate RNAs. Essential for the accumulation and stability of U4 snRNA, U6 snRNA, and box C/D snoRNAs. The sequence is that of 13 kDa ribonucleoprotein-associated protein (SNU13) from Eremothecium gossypii (strain ATCC 10895 / CBS 109.51 / FGSC 9923 / NRRL Y-1056) (Yeast).